The sequence spans 1364 residues: Formin-like protein 6 (1364 aa).

In terms of domain architecture, Phosphatase tensin-type spans 9 to 193 (YRKPPDGLLE…HYISRRNVSA (185 aa)). The Phosphocysteine intermediate role is filled by Cys126. Residues 199–338 (DRALTLDCVI…FRAEVLFSEM (140 aa)) enclose the C2 tensin-type domain. Disordered stretches follow at residues 614–934 (KCTP…NLKP), 976–999 (VLPS…KPEK), and 1317–1364 (EAEA…ASAK). Positions 617–631 (PSPPPLLPPLAPVVP) are enriched in pro residues. The segment covering 657 to 690 (SFPSLSPTQQKQSTSKLCQTILPTNHQLSSSNIT) has biased composition (polar residues). The span at 734–743 (PPAPPPPPLQ) shows a compositional bias: pro residues. Residues 744–757 (SPSTPRCSPVRTLA) show a composition bias toward low complexity. Pro residues-rich tracts occupy residues 774–813 (GPPP…PAAP) and 856–865 (PSPPPPPPPC). Over residues 916-929 (MSRSLQSGQAASRR) the composition is skewed to polar residues. The FH2 domain occupies 922–1322 (SGQAASRRSN…KALKEAEAEK (401 aa)). The segment covering 1317-1351 (EAEAEKTKKEPENAQKTKEPGNDKAKHNNSIKELD) has biased composition (basic and acidic residues). Residues 1353-1364 (SLQSPAQTASAK) show a composition bias toward polar residues.

The protein belongs to the formin-like family. Class-II subfamily.

The sequence is that of Formin-like protein 6 (FH6) from Oryza sativa subsp. japonica (Rice).